We begin with the raw amino-acid sequence, 357 residues long: Phospho-N-acetylmuramoyl-pentapeptide-transferase (357 aa).

A run of 10 helical transmembrane segments spans residues 23 to 43 (AIFSLLTSFFINLYIGPYFIY), 70 to 90 (TMGGIFIIFSILFSTILYCNL), 91 to 111 (SNIYIWYVISILIGYGLIGFI), 127 to 147 (LKWKYFFLSIIAFIFICMIKI), 171 to 191 (YLYVFLSYFVLVGTSNAVNLT), 196 to 216 (GLAIMPVIFLTCGLTLISLFS), 236 to 256 (LAILCMAIVGSGLGFLWFNSY), 260 to 280 (VFMGDVGSLALGGSLGAIAIL), 286 to 306 (LLIIMGGIFVFETISVILQII), and 334 to 354 (LIIVRFWIVSLILLLISLISL).

This sequence belongs to the glycosyltransferase 4 family. MraY subfamily. Mg(2+) is required as a cofactor.

The protein localises to the cell inner membrane. It catalyses the reaction UDP-N-acetyl-alpha-D-muramoyl-L-alanyl-gamma-D-glutamyl-meso-2,6-diaminopimeloyl-D-alanyl-D-alanine + di-trans,octa-cis-undecaprenyl phosphate = di-trans,octa-cis-undecaprenyl diphospho-N-acetyl-alpha-D-muramoyl-L-alanyl-D-glutamyl-meso-2,6-diaminopimeloyl-D-alanyl-D-alanine + UMP. The protein operates within cell wall biogenesis; peptidoglycan biosynthesis. Its function is as follows. Catalyzes the initial step of the lipid cycle reactions in the biosynthesis of the cell wall peptidoglycan: transfers peptidoglycan precursor phospho-MurNAc-pentapeptide from UDP-MurNAc-pentapeptide onto the lipid carrier undecaprenyl phosphate, yielding undecaprenyl-pyrophosphoryl-MurNAc-pentapeptide, known as lipid I. The sequence is that of Phospho-N-acetylmuramoyl-pentapeptide-transferase from Buchnera aphidicola subsp. Acyrthosiphon pisum (strain Tuc7).